The sequence spans 691 residues: Methionine--tRNA ligase (691 aa).

Positions 12–22 (PYANGSFHIGH) match the 'HIGH' region motif. Residues Cys-143, Cys-146, Cys-156, and Cys-159 each contribute to the Zn(2+) site. Positions 341-345 (KMSKS) match the 'KMSKS' region motif. An ATP-binding site is contributed by Lys-344. The tRNA-binding domain maps to 585-691 (DFVKVDLRIA…PGAQPGMRIH (107 aa)).

It belongs to the class-I aminoacyl-tRNA synthetase family. MetG type 1 subfamily. Homodimer. Zn(2+) serves as cofactor.

It localises to the cytoplasm. The catalysed reaction is tRNA(Met) + L-methionine + ATP = L-methionyl-tRNA(Met) + AMP + diphosphate. Functionally, is required not only for elongation of protein synthesis but also for the initiation of all mRNA translation through initiator tRNA(fMet) aminoacylation. The sequence is that of Methionine--tRNA ligase from Bordetella avium (strain 197N).